A 401-amino-acid polypeptide reads, in one-letter code: NADH-quinone oxidoreductase subunit D 2 (401 aa).

Belongs to the complex I 49 kDa subunit family. As to quaternary structure, NDH-1 is composed of 14 different subunits. Subunits NuoB, C, D, E, F, and G constitute the peripheral sector of the complex.

The protein resides in the cell inner membrane. The enzyme catalyses a quinone + NADH + 5 H(+)(in) = a quinol + NAD(+) + 4 H(+)(out). Its function is as follows. NDH-1 shuttles electrons from NADH, via FMN and iron-sulfur (Fe-S) centers, to quinones in the respiratory chain. The immediate electron acceptor for the enzyme in this species is believed to be ubiquinone. Couples the redox reaction to proton translocation (for every two electrons transferred, four hydrogen ions are translocated across the cytoplasmic membrane), and thus conserves the redox energy in a proton gradient. The polypeptide is NADH-quinone oxidoreductase subunit D 2 (Koribacter versatilis (strain Ellin345)).